The chain runs to 323 residues: UPF0200/UPF0201 protein AF_1395 (323 aa).

The segment at 1–185 is UPF0200; it reads MVLEMKVIAF…EKIRQILLKL (185 aa). 12 to 19 is a binding site for ATP; sequence GYPLSGKS. Positions 186–323 are UPF0201; that stretch reads AKNVEIEIRT…GRPVKEIDKL (138 aa).

It in the N-terminal section; belongs to the UPF0200 family. The protein in the C-terminal section; belongs to the UPF0201 family.

This chain is UPF0200/UPF0201 protein AF_1395, found in Archaeoglobus fulgidus (strain ATCC 49558 / DSM 4304 / JCM 9628 / NBRC 100126 / VC-16).